The sequence spans 276 residues: Large ribosomal subunit protein uL2 (276 aa).

2 disordered regions span residues 36–55 (PLPRKAGRNNQGKLTVRHRG) and 219–276 (TVRG…GRKK). Positions 255–276 (LGKKTRKKKNRSNKLIVRGRKK) are enriched in basic residues.

This sequence belongs to the universal ribosomal protein uL2 family. Part of the 50S ribosomal subunit. Forms a bridge to the 30S subunit in the 70S ribosome.

One of the primary rRNA binding proteins. Required for association of the 30S and 50S subunits to form the 70S ribosome, for tRNA binding and peptide bond formation. It has been suggested to have peptidyltransferase activity; this is somewhat controversial. Makes several contacts with the 16S rRNA in the 70S ribosome. The polypeptide is Large ribosomal subunit protein uL2 (Macrococcus caseolyticus (strain JCSC5402) (Macrococcoides caseolyticum)).